The sequence spans 80 residues: Calmodulin (80 aa).

EF-hand domains are found at residues 12–47 and 48–80; these read DSEE…LGEK and LTDE…MTSK. 9 residues coordinate Ca(2+): D25, D27, N29, E36, D61, D63, D65, Q67, and E72.

Belongs to the calmodulin family.

Calmodulin mediates the control of a large number of enzymes, ion channels and other proteins by Ca(2+). Among the enzymes to be stimulated by the calmodulin-Ca(2+) complex are a number of protein kinases and phosphatases. In Strongylocentrotus purpuratus (Purple sea urchin), this protein is Calmodulin.